A 202-amino-acid chain; its full sequence is MHNASDIQNALVPMVIEQTAKGERSYDIYSRLLKERIIFLVGQVEEHMANLIVAQLLFLESESPDKDIFLYINSPGGSVTAGMAIYDTMQFIKPNVSTVCIGQAASMGAFLLAGGEKGKRFCLPNSRVMIHQPLGGFQGQASDIAIHAQEILGIKHKLNLMLAEHTGQPLEVIERDTDRDNFMSATQAVEYGLVDSVMTKRG.

Catalysis depends on Ser-106, which acts as the Nucleophile. The active site involves His-131.

It belongs to the peptidase S14 family. As to quaternary structure, fourteen ClpP subunits assemble into 2 heptameric rings which stack back to back to give a disk-like structure with a central cavity, resembling the structure of eukaryotic proteasomes.

Its subcellular location is the cytoplasm. The catalysed reaction is Hydrolysis of proteins to small peptides in the presence of ATP and magnesium. alpha-casein is the usual test substrate. In the absence of ATP, only oligopeptides shorter than five residues are hydrolyzed (such as succinyl-Leu-Tyr-|-NHMec, and Leu-Tyr-Leu-|-Tyr-Trp, in which cleavage of the -Tyr-|-Leu- and -Tyr-|-Trp bonds also occurs).. Functionally, cleaves peptides in various proteins in a process that requires ATP hydrolysis. Has a chymotrypsin-like activity. Plays a major role in the degradation of misfolded proteins. This Shewanella sp. (strain W3-18-1) protein is ATP-dependent Clp protease proteolytic subunit.